The sequence spans 117 residues: uncharacterized protein (117 aa).

A helical membrane pass occupies residues 1–21; that stretch reads MEIAIIALFIVSIALIAFSYS. Residues 38-67 are a coiled coil; the sequence is LSAMQEIYKLKKKMTVLEEELLETNLVIRK.

The protein localises to the cell membrane. This is an uncharacterized protein from Bacillus subtilis (strain 168).